The following is a 510-amino-acid chain: ATP synthase subunit alpha (510 aa).

169 to 176 (GDRQTGKT) provides a ligand contact to ATP.

Belongs to the ATPase alpha/beta chains family. F-type ATPases have 2 components, CF(1) - the catalytic core - and CF(0) - the membrane proton channel. CF(1) has five subunits: alpha(3), beta(3), gamma(1), delta(1), epsilon(1). CF(0) has four main subunits: a(1), b(1), b'(1) and c(9-12).

The protein resides in the cell inner membrane. The catalysed reaction is ATP + H2O + 4 H(+)(in) = ADP + phosphate + 5 H(+)(out). Its function is as follows. Produces ATP from ADP in the presence of a proton gradient across the membrane. The alpha chain is a regulatory subunit. This is ATP synthase subunit alpha from Rhodopseudomonas palustris (strain BisB18).